The sequence spans 164 residues: Transcriptional repressor NrdR (164 aa).

A zinc finger lies at 3 to 34 (CPFCRHEDSRVVDSRSLDDGSAIRRRRQCQAC). The ATP-cone domain maps to 46–136 (LTVVKRSGVA…VYRDFESLDD (91 aa)).

The protein belongs to the NrdR family. Requires Zn(2+) as cofactor.

In terms of biological role, negatively regulates transcription of bacterial ribonucleotide reductase nrd genes and operons by binding to NrdR-boxes. This chain is Transcriptional repressor NrdR, found in Micrococcus luteus (strain ATCC 4698 / DSM 20030 / JCM 1464 / CCM 169 / CCUG 5858 / IAM 1056 / NBRC 3333 / NCIMB 9278 / NCTC 2665 / VKM Ac-2230) (Micrococcus lysodeikticus).